A 461-amino-acid chain; its full sequence is Fumarate hydratase class II (461 aa).

Residues 97-99, 127-130, 137-139, and Thr185 contribute to the substrate site; these read SGT, HPND, and SSN. His186 serves as the catalytic Proton donor/acceptor. Ser316 is an active-site residue. Substrate-binding positions include Ser317 and 322 to 324; that span reads KVN.

The protein belongs to the class-II fumarase/aspartase family. Fumarase subfamily. As to quaternary structure, homotetramer.

It is found in the cytoplasm. The catalysed reaction is (S)-malate = fumarate + H2O. The protein operates within carbohydrate metabolism; tricarboxylic acid cycle; (S)-malate from fumarate: step 1/1. Involved in the TCA cycle. Catalyzes the stereospecific interconversion of fumarate to L-malate. This chain is Fumarate hydratase class II, found in Oceanobacillus iheyensis (strain DSM 14371 / CIP 107618 / JCM 11309 / KCTC 3954 / HTE831).